A 265-amino-acid polypeptide reads, in one-letter code: Undecaprenyl-diphosphatase (265 aa).

7 helical membrane passes run 42 to 62 (AATF…VLYW), 82 to 102 (GIML…AAHS), 108 to 128 (LFTP…MLLV), 143 to 163 (MSPA…WPGF), 181 to 201 (GLAA…ATGY), 221 to 241 (GFVV…ALVG), and 248 to 264 (FAWY…YFMA).

The protein belongs to the UppP family.

It localises to the cell inner membrane. It carries out the reaction di-trans,octa-cis-undecaprenyl diphosphate + H2O = di-trans,octa-cis-undecaprenyl phosphate + phosphate + H(+). In terms of biological role, catalyzes the dephosphorylation of undecaprenyl diphosphate (UPP). Confers resistance to bacitracin. This Nitratidesulfovibrio vulgaris (strain DP4) (Desulfovibrio vulgaris) protein is Undecaprenyl-diphosphatase.